The following is a 494-amino-acid chain: Rhamnulokinase (494 aa).

18 to 22 (ASSGR) serves as a coordination point for ATP. Substrate is bound by residues G87 and 242–244 (HDT). D243 (proton acceptor) is an active-site residue. Residue T265 coordinates ATP. N302 provides a ligand contact to substrate. ATP is bound at residue Q310. Cysteines 360 and 377 form a disulfide. ATP is bound at residue G411.

This sequence belongs to the rhamnulokinase family. Mg(2+) serves as cofactor.

It catalyses the reaction L-rhamnulose + ATP = L-rhamnulose 1-phosphate + ADP + H(+). It participates in carbohydrate degradation; L-rhamnose degradation; glycerone phosphate from L-rhamnose: step 2/3. In terms of biological role, involved in the catabolism of L-rhamnose (6-deoxy-L-mannose). Catalyzes the transfer of the gamma-phosphate group from ATP to the 1-hydroxyl group of L-rhamnulose to yield L-rhamnulose 1-phosphate. This is Rhamnulokinase from Enterococcus faecalis (strain ATCC 700802 / V583).